The sequence spans 101 residues: NAD(P)H-quinone oxidoreductase subunit 4L, chloroplastic (101 aa).

3 helical membrane-spanning segments follow: residues 2–22 (MLEYVLGLSAYLFSIGIYGLI), 32–52 (MCLELILNAVNLNFVTFSDFF), and 61–81 (ILSIFVISIAAAEAAIGPAIV).

It belongs to the complex I subunit 4L family. As to quaternary structure, NDH is composed of at least 16 different subunits, 5 of which are encoded in the nucleus.

The protein resides in the plastid. Its subcellular location is the chloroplast thylakoid membrane. It carries out the reaction a plastoquinone + NADH + (n+1) H(+)(in) = a plastoquinol + NAD(+) + n H(+)(out). The enzyme catalyses a plastoquinone + NADPH + (n+1) H(+)(in) = a plastoquinol + NADP(+) + n H(+)(out). NDH shuttles electrons from NAD(P)H:plastoquinone, via FMN and iron-sulfur (Fe-S) centers, to quinones in the photosynthetic chain and possibly in a chloroplast respiratory chain. The immediate electron acceptor for the enzyme in this species is believed to be plastoquinone. Couples the redox reaction to proton translocation, and thus conserves the redox energy in a proton gradient. This Populus alba (White poplar) protein is NAD(P)H-quinone oxidoreductase subunit 4L, chloroplastic.